The sequence spans 129 residues: Ig kappa chain V-IV region S107B (129 aa).

The signal sequence occupies residues 1–22 (MDLQVQIIXFLLISVTVIMSRG). The interval 23-45 (ENVLTQSPAIMAASLGQKVTMTC) is framework-1. The cysteines at positions 45 and 111 are disulfide-linked. The interval 46–57 (SASSSVSSSYLH) is complementarity-determining-1. The interval 58 to 72 (WYQQKSGASPKPLIH) is framework-2. A complementarity-determining-2 region spans residues 73–79 (RTSNLAS). Residues 80–111 (GVPARFSGSGSGTSYSLTISSVEAEDDATYYC) form a framework-3 region. The tract at residues 112–118 (QQWSGYP) is complementarity-determining-3. The framework-4 stretch occupies residues 119-128 (FGSGTKLEIK).

The sequence is that of Ig kappa chain V-IV region S107B from Mus musculus (Mouse).